The primary structure comprises 104 residues: Inner membrane protein YjcH (104 aa).

Topologically, residues 1–24 (MNGTIYQRIEDNAHFRELVEKRQR) are cytoplasmic. The helical transmembrane segment at 25–47 (FATILSIIMLAVYIGFILLIAFA) threads the bilayer. Over 48 to 61 (PGWLGTPLNPNTSV) the chain is Periplasmic. Residues 62-84 (TRGIPIGVGVIVISFVLTGIYIW) form a helical membrane-spanning segment. Residues 85–104 (RANGEFDRLNNEVLHEVQAS) are Cytoplasmic-facing.

It localises to the cell inner membrane. The protein is Inner membrane protein YjcH (yjcH) of Escherichia coli (strain K12).